A 1040-amino-acid polypeptide reads, in one-letter code: Multidrug resistance protein MdtB (1040 aa).

A run of 12 helical transmembrane segments spans residues 16–36 (FIMRPVATTLLMVAILLAGII), 347–367 (LMMAIALVVMIIYLFLRNIPA), 369–389 (IIPGVAVPLSLIGTFAVMVFL), 396–416 (LTLMALTIATGFVVDDAIVVI), 440–460 (IGFTIISLTFSLIAVLIPLLF), 472–492 (FAITLAVAILISAVVSLTLTP), 537–557 (WLTLSVALSTLLLSVLLWVFI), 863–883 (LGSTVWLIVAAVVAMYIVLGI), 888–908 (FIHPITILSTLPTAGVGALLA), 911–931 (IAGSELDVIAIIGIILLIGIV), 968–988 (ILMTTLAALLGALPLMLSTGV), and 998–1018 (IGMVGGLVVSQVLTLFTTPVI).

Belongs to the resistance-nodulation-cell division (RND) (TC 2.A.6) family. MdtB subfamily. Part of a tripartite efflux system composed of MdtA, MdtB and MdtC. MdtB forms a heteromultimer with MdtC.

Its subcellular location is the cell inner membrane. This chain is Multidrug resistance protein MdtB, found in Shigella boydii serotype 18 (strain CDC 3083-94 / BS512).